The sequence spans 448 residues: Putative vacuolar cation/proton exchanger 6 (448 aa).

The Cytoplasmic segment spans residues Met-31–Ile-81. Residues Val-82 to His-102 traverse the membrane as a helical segment. The Extracellular portion of the chain corresponds to Tyr-103 to Gly-109. The chain crosses the membrane as a helical span at residues Trp-110 to Thr-130. Residues Glu-131–Val-141 lie on the Cytoplasmic side of the membrane. The helical transmembrane segment at Gly-142–Leu-162 threads the bilayer. A cation selection region spans residues Gly-150–Val-185. The Extracellular segment spans residues Lys-163–Ile-178. The chain crosses the membrane as a helical span at residues Leu-179–Gly-199. The Cytoplasmic segment spans residues Lys-200–Ala-209. Residues Val-210 to His-230 traverse the membrane as a helical segment. Residues Tyr-231 to Leu-243 are Extracellular-facing. The helical transmembrane segment at Ala-244 to Gln-264 threads the bilayer. Topologically, residues Leu-265–Glu-295 are cytoplasmic. Residues Ala-296 to Asp-316 form a helical membrane-spanning segment. Residues Ala-317–Val-334 are Extracellular-facing. Residues Ile-335–Lys-355 traverse the membrane as a helical segment. The segment at Gly-341–Ala-376 is cation selection. Topologically, residues Asp-356–Gly-363 are cytoplasmic. The chain crosses the membrane as a helical span at residues Val-364–Gly-384. Topologically, residues Trp-385 to Leu-393 are extracellular. A helical transmembrane segment spans residues Asn-394 to Leu-414. Topologically, residues Gln-415–Arg-425 are cytoplasmic. The helical transmembrane segment at Leu-426 to His-446 threads the bilayer. At Gln-447–Gly-448 the chain is on the extracellular side.

The protein belongs to the Ca(2+):cation antiporter (CaCA) (TC 2.A.19) family. Cation/proton exchanger (CAX) subfamily.

It localises to the vacuole membrane. In terms of biological role, vacuolar cation/proton exchanger (CAX). Translocates Ca(2+) and other metal ions into vacuoles using the proton gradient formed by H(+)-ATPase and H(+)-pyrophosphatase. The protein is Putative vacuolar cation/proton exchanger 6 (CAX6) of Arabidopsis thaliana (Mouse-ear cress).